Reading from the N-terminus, the 273-residue chain is 1,4-dihydroxy-2-naphthoyl-CoA synthase (273 aa).

Residues arginine 34, 73–77 (SGGDQ), tyrosine 85, 117–121 (YAVGG), threonine 143, serine 149, tyrosine 246, and lysine 261 contribute to the substrate site. 142–144 (QTG) is a hydrogencarbonate binding site. A compositionally biased stretch (basic and acidic residues) spans 254–265 (GRDAFKEKRDPD). The tract at residues 254 to 273 (GRDAFKEKRDPDFDQFPKFP) is disordered.

This sequence belongs to the enoyl-CoA hydratase/isomerase family. MenB subfamily. Hydrogencarbonate is required as a cofactor.

The enzyme catalyses 2-succinylbenzoyl-CoA + H(+) = 1,4-dihydroxy-2-naphthoyl-CoA + H2O. Its pathway is quinol/quinone metabolism; 1,4-dihydroxy-2-naphthoate biosynthesis; 1,4-dihydroxy-2-naphthoate from chorismate: step 6/7. It functions in the pathway quinol/quinone metabolism; menaquinone biosynthesis. Its function is as follows. Converts o-succinylbenzoyl-CoA (OSB-CoA) to 1,4-dihydroxy-2-naphthoyl-CoA (DHNA-CoA). This is 1,4-dihydroxy-2-naphthoyl-CoA synthase from Staphylococcus aureus (strain Mu50 / ATCC 700699).